A 168-amino-acid polypeptide reads, in one-letter code: Mitochondrial import inner membrane translocase subunit TIM14 (168 aa).

Residues 1 to 12 (MSSQSNTGNSIE) show a composition bias toward polar residues. The tract at residues 1–29 (MSSQSNTGNSIEAPQLPIPGQTNGSANVT) is disordered. Topologically, residues 1–65 (MSSQSNTGNS…QALNYMGEHP (65 aa)) are mitochondrial intermembrane. The chain crosses the membrane as a helical span at residues 66–83 (VITGFGAFLTLYFTAGAY). Residues 84–168 (KSISKGLNGG…DFLEKRGISK (85 aa)) lie on the Mitochondrial matrix side of the membrane. The region spanning 112-168 (EALQILNLTENTLTKKKLKEVHRKIMLANHPDKGGSPFLATKINEAKDFLEKRGISK) is the J domain.

It belongs to the TIM14 family. Homodimer and heterodimer with PAM16/TIM16. Homodimerization may not be relevant in vivo, while heterodimerization is essential for activity regulation of mtHSP70. Component of the PAM complex, at least composed of mtHsp70, MGE1, TIM44, PAM16, PAM17 and PAM18/TIM14. Interacts directly with mtHsp70. Interacts directly with TIM17 subunit of the TIM23 complex.

Its subcellular location is the mitochondrion inner membrane. In terms of biological role, essential component of the PAM complex, a complex required for the translocation of transit peptide-containing proteins from the inner membrane into the mitochondrial matrix in an ATP-dependent manner. In the complex, it is required to stimulate activity of mtHSP70 (SSC1). This Saccharomyces cerevisiae (strain ATCC 204508 / S288c) (Baker's yeast) protein is Mitochondrial import inner membrane translocase subunit TIM14 (PAM18).